A 65-amino-acid chain; its full sequence is Toxin KTx8 (65 aa).

The first 25 residues, M1 to G25, serve as a signal peptide directing secretion. 3 disulfides stabilise this stretch: C31/C53, C38/C61, and C42/C63.

The protein belongs to the short scorpion toxin superfamily. Potassium channel inhibitor family. Alpha-KTx 11 subfamily. In terms of tissue distribution, expressed by the venom gland.

Its subcellular location is the secreted. In terms of biological role, this recombinant toxin inhibits the mammalian voltage-gated potassium channels Kv1.3/KCNA3 in vitro with an IC(50) of 26.40 nM. The protein is Toxin KTx8 of Lychas mucronatus (Chinese swimming scorpion).